The sequence spans 439 residues: Nuclear hormone receptor family member nhr-97 (439 aa).

Residues 1-13 (MSGDAQPSSNQRA) show a composition bias toward polar residues. The interval 1-22 (MSGDAQPSSNQRATEARPPPSP) is disordered. The nuclear receptor DNA-binding region spans 32 to 108 (GALCVVCGDR…VGMKIEAVKM (77 aa)). NR C4-type zinc fingers lie at residues 35-56 (CVVC…CHGC) and 72-96 (CRYG…FHRC). Positions 112 to 135 (LTKRKKEKTDEDDTDDGGSHESFE) are disordered. The NR LBD domain occupies 173–408 (FVQPSLQNLL…GEGLLFWQLY (236 aa)).

Belongs to the nuclear hormone receptor family.

It localises to the nucleus. In terms of biological role, orphan nuclear receptor. In Caenorhabditis elegans, this protein is Nuclear hormone receptor family member nhr-97 (nhr-97).